The following is a 1198-amino-acid chain: Integrator complex subunit 2 (1198 aa).

Residues 421 to 437 (FVSLSFCMLLAFSTLVS) form a helical membrane-spanning segment.

The protein belongs to the Integrator subunit 2 family. Component of the Integrator complex, composed of core subunits INTS1, INTS2, INTS3, INTS4, INTS5, INTS6, INTS7, INTS8, INTS9/RC74, INTS10, INTS11/CPSF3L, INTS12, INTS13, INTS14 and INTS15. The core complex associates with protein phosphatase 2A subunits PPP2CA and PPP2R1A, to form the Integrator-PP2A (INTAC) complex.

The protein localises to the nucleus. Its subcellular location is the nucleus membrane. It localises to the cytoplasm. Functionally, component of the integrator complex, a multiprotein complex that terminates RNA polymerase II (Pol II) transcription in the promoter-proximal region of genes. The integrator complex provides a quality checkpoint during transcription elongation by driving premature transcription termination of transcripts that are unfavorably configured for transcriptional elongation: the complex terminates transcription by (1) catalyzing dephosphorylation of the C-terminal domain (CTD) of Pol II subunit POLR2A/RPB1 and SUPT5H/SPT5, (2) degrading the exiting nascent RNA transcript via endonuclease activity and (3) promoting the release of Pol II from bound DNA. The integrator complex is also involved in terminating the synthesis of non-coding Pol II transcripts, such as enhancer RNAs (eRNAs), small nuclear RNAs (snRNAs), telomerase RNAs and long non-coding RNAs (lncRNAs). Mediates recruitment of cytoplasmic dynein to the nuclear envelope, probably as component of the integrator complex. The polypeptide is Integrator complex subunit 2 (Ints2) (Mus musculus (Mouse)).